Consider the following 429-residue polypeptide: tRNA-2-methylthio-N(6)-dimethylallyladenosine synthase (429 aa).

The 110-residue stretch at 1-110 folds into the MTTase N-terminal domain; it reads MKFFIKTYGC…IPEAVELSIK (110 aa). [4Fe-4S] cluster-binding residues include cysteine 10, cysteine 46, cysteine 75, cysteine 146, cysteine 150, and cysteine 153. The Radical SAM core domain maps to 132–364; that stretch reads RNSKHHAWIT…NLQKEINKML (233 aa). One can recognise a TRAM domain in the interval 366-427; the sequence is ESYLDKTVEV…AGPLYGDIIK (62 aa).

It belongs to the methylthiotransferase family. MiaB subfamily. Monomer. [4Fe-4S] cluster serves as cofactor.

It is found in the cytoplasm. It catalyses the reaction N(6)-dimethylallyladenosine(37) in tRNA + (sulfur carrier)-SH + AH2 + 2 S-adenosyl-L-methionine = 2-methylsulfanyl-N(6)-dimethylallyladenosine(37) in tRNA + (sulfur carrier)-H + 5'-deoxyadenosine + L-methionine + A + S-adenosyl-L-homocysteine + 2 H(+). Catalyzes the methylthiolation of N6-(dimethylallyl)adenosine (i(6)A), leading to the formation of 2-methylthio-N6-(dimethylallyl)adenosine (ms(2)i(6)A) at position 37 in tRNAs that read codons beginning with uridine. The chain is tRNA-2-methylthio-N(6)-dimethylallyladenosine synthase from Thermosipho africanus (strain TCF52B).